A 637-amino-acid chain; its full sequence is 3D-(3,5/4)-trihydroxycyclohexane-1,2-dione hydrolase (637 aa).

E66 contacts thiamine diphosphate. The interval 442–522 (SLPGDLQRLW…INVLLFDNSG (81 aa)) is thiamine pyrophosphate binding. D493 and N520 together coordinate Mg(2+).

It belongs to the TPP enzyme family. It depends on Mg(2+) as a cofactor. Thiamine diphosphate is required as a cofactor.

It catalyses the reaction 3D-3,5/4-trihydroxycyclohexane-1,2-dione + H2O = 5-deoxy-D-glucuronate + H(+). Its pathway is polyol metabolism; myo-inositol degradation into acetyl-CoA; acetyl-CoA from myo-inositol: step 3/7. Involved in the cleavage of the C1-C2 bond of 3D-(3,5/4)-trihydroxycyclohexane-1,2-dione (THcHDO) to yield 5-deoxy-glucuronate (5DG). This is 3D-(3,5/4)-trihydroxycyclohexane-1,2-dione hydrolase from Bacillus velezensis (strain DSM 23117 / BGSC 10A6 / LMG 26770 / FZB42) (Bacillus amyloliquefaciens subsp. plantarum).